The following is a 184-amino-acid chain: TRAF-interacting protein with FHA domain-containing protein A (184 aa).

Phosphothreonine is present on T9. One can recognise an FHA domain in the interval 47–103 (VKFGRNSNMCQYTFQDKQVSRIQFVLQPFKQFNSSVLSFEIKNMSKKTSLMVDNQEL). The disordered stretch occupies residues 152-184 (NNWPTQNPIPEDGMYSSYFTHRSSPSEMDENEL). Residues 168 to 177 (SYFTHRSSPS) are compositionally biased toward polar residues.

It belongs to the TIFA family. In terms of assembly, homooligomer; homooligomerizes following phosphorylation at Thr-9. Interacts with IRAK1, TRAF2 and TRAF6. Interacts with TIFAB; binding to TIFAB inhibits TRAF6 activation, possibly by inducing a conformational change in TIFA. Interacts with ZCCHC11; binding to ZCCHC11 suppresses the TRAF6-dependent activation of NF-kappa-B. In terms of processing, phosphorylated at Thr-9 following detection of ADP-D-glycero-beta-D-manno-heptose (ADP-Heptose) by ALPK1. Phosphorylation at Thr-9 by ALPK1 leads to the formation of an intermolecular binding between the FHA domain and phosphorylated Thr-9, promoting TIFA oligomerization and TIFA-mediated NF-kappa-B activation. In terms of tissue distribution, highly expressed in the spleen and at lower levels in heart, brain, lung, liver, kidney and testes.

It is found in the cytoplasm. Its function is as follows. Adapter molecule that plays a key role in the activation of pro-inflammatory NF-kappa-B signaling following detection of bacterial pathogen-associated molecular pattern metabolites (PAMPs). Promotes activation of an innate immune response by inducing the oligomerization and polyubiquitination of TRAF6, which leads to the activation of TAK1 and IKK through a proteasome-independent mechanism. TIFA-dependent innate immune response is triggered by ADP-D-glycero-beta-D-manno-heptose (ADP-Heptose), a potent PAMP present in all Gram-negative and some Gram-positive bacteria: ADP-Heptose is recognized by ALPK1, which phosphorylates TIFA at Thr-9, leading to TIFA homooligomerization and subsequent activation of pro-inflammatory NF-kappa-B signaling. In Mus musculus (Mouse), this protein is TRAF-interacting protein with FHA domain-containing protein A.